The following is a 507-amino-acid chain: Extracellular elastase (507 aa).

The first 28 residues, methionine 1 to alanine 28, serve as a signal peptide directing secretion. Positions lysine 29 to glutamate 207 are excised as a propeptide. Aspartate 347 serves as a coordination point for Ca(2+). Histidine 351 contacts Zn(2+). Glutamate 352 is an active-site residue. The Zn(2+) site is built by histidine 355 and glutamate 375. Aspartate 386, glutamate 388, aspartate 389, leucine 391, glutamate 394, tyrosine 397, threonine 398, valine 401, and aspartate 404 together coordinate Ca(2+). The active-site Proton donor is the histidine 435.

It belongs to the peptidase M4 family. Requires Ca(2+) as cofactor. The cofactor is Zn(2+).

The protein resides in the secreted. Protease that has a low substrate specificity. Glucagon is preferentially cleaved between aromatic (Phe) and hydrophobic (Val) amino acids. Hydrolyzes casein and elastin. The sequence is that of Extracellular elastase (sepA) from Staphylococcus epidermidis.